The primary structure comprises 910 residues: Eukaryotic translation initiation factor 3 subunit C (910 aa).

Residues 1–21 are disordered; it reads MSRFFANGSDSESESSEDEIQ. The segment covering 11–20 has biased composition (acidic residues); sequence SESESSEDEI. Phosphoserine is present on residues S34, S165, S176, and S185. Residues 157-279 form a disordered region; the sequence is FREAPDQESE…IRKRAEDDED (123 aa). Over residues 162 to 186 the composition is skewed to acidic residues; it reads DQESEAEDEVVALESDGGDAGDDSD. Residues 188–207 are compositionally biased toward low complexity; sequence GVKPTEAAPKAVKTAPAKAA. The segment covering 209–235 has biased composition (acidic residues); the sequence is ADDDDSDDSIDWDSDSESETESSDDEN. The span at 240-268 shows a compositional bias: basic and acidic residues; the sequence is MRERFLKRTTEKEEKDDDKRKDKRKEQKI. The PCI domain occupies 639–815; the sequence is FHMHINLELL…ETVVMHRSEP (177 aa). The segment at 847 to 910 is disordered; sequence FFQRGNMGNR…QQQVQTIDEE (64 aa). Over residues 862 to 874 the composition is skewed to low complexity; it reads NRNQNNQGGNWLG. Residues 882–891 show a composition bias toward basic residues; the sequence is RNRNQRGHHK. Low complexity predominate over residues 895–910; sequence DRQQQQQQQVQTIDEE.

Belongs to the eIF-3 subunit C family. As to quaternary structure, component of the eukaryotic translation initiation factor 3 (eIF-3) complex. The eIF-3 complex interacts with pix.

The protein resides in the cytoplasm. Component of the eukaryotic translation initiation factor 3 (eIF-3) complex, which is involved in protein synthesis of a specialized repertoire of mRNAs and, together with other initiation factors, stimulates binding of mRNA and methionyl-tRNAi to the 40S ribosome. The eIF-3 complex specifically targets and initiates translation of a subset of mRNAs involved in cell proliferation. The polypeptide is Eukaryotic translation initiation factor 3 subunit C (Drosophila erecta (Fruit fly)).